The following is a 964-amino-acid chain: Lon protease homolog, mitochondrial (964 aa).

The Lon N-terminal domain maps to 89–300; sequence VIALPLPHRP…LTLELVKKEM (212 aa). An ATP-binding site is contributed by 455-462; that stretch reads GPPGVGKT. Positions 663–740 are disordered; it reads GVSNEPDHES…TSKGNKGTDG (78 aa). Residues 673 to 687 show a composition bias toward polar residues; that stretch reads VSASVTEESGNGDNT. The span at 688–698 shows a compositional bias: basic and acidic residues; sequence TTKDEILKDPA. Positions 703-712 are enriched in polar residues; the sequence is SVTNNVTNPA. Residues 773–957 enclose the Lon proteolytic domain; sequence HTPVGVVMGL…SEIYDLAFQS (185 aa). Catalysis depends on residues serine 863 and lysine 906.

Belongs to the peptidase S16 family. Homoheptamer. Organized in a ring with a central cavity.

It is found in the mitochondrion matrix. It catalyses the reaction Hydrolysis of proteins in presence of ATP.. Functionally, ATP-dependent serine protease that mediates the selective degradation of misfolded, unassembled or oxidatively damaged polypeptides as well as certain short-lived regulatory proteins in the mitochondrial matrix. May also have a chaperone function in the assembly of inner membrane protein complexes. Participates in the regulation of mitochondrial gene expression and in the maintenance of the integrity of the mitochondrial genome. Binds to mitochondrial DNA in a site-specific manner. The chain is Lon protease homolog, mitochondrial (LON2) from Zea mays (Maize).